A 298-amino-acid chain; its full sequence is Nucleotide-binding protein Csal_2229 (298 aa).

8–15 (GRSGSGKS) serves as a coordination point for ATP. Position 59-62 (59-62 (DARN)) interacts with GTP.

This sequence belongs to the RapZ-like family.

In terms of biological role, displays ATPase and GTPase activities. The sequence is that of Nucleotide-binding protein Csal_2229 from Chromohalobacter salexigens (strain ATCC BAA-138 / DSM 3043 / CIP 106854 / NCIMB 13768 / 1H11).